The following is a 282-amino-acid chain: MSDFSMETLKSLRQRTGVGLTKCKEALEHAKGNLEDAVVYLRKLGLASAGKKEHRETKEGVIAASVDEHGAAIVEVNVETDFVANNSVFRTFVTGLLSDILNNKLSDVDALAQVTSSQEPSLSVEELKAVTMQTVGENIRISRALYTPVNSNQSVGIYSHGNGKAVALVFLSGSDKQEALAKDIAMHIVASQPQFLSKESVPQEVLEREREVFSSQLSGKPQEVIEKITTGKFKAFFQETCLLEQAFIKDPDVTIQELVDRAAKASGEPLKVEHFVFWKIGA.

The segment at 80 to 83 is involved in Mg(2+) ion dislocation from EF-Tu; the sequence is TDFV.

Belongs to the EF-Ts family.

It is found in the cytoplasm. Associates with the EF-Tu.GDP complex and induces the exchange of GDP to GTP. It remains bound to the aminoacyl-tRNA.EF-Tu.GTP complex up to the GTP hydrolysis stage on the ribosome. The protein is Elongation factor Ts (tsf) of Chlamydia muridarum (strain MoPn / Nigg).